A 479-amino-acid polypeptide reads, in one-letter code: Probable glycine dehydrogenase (decarboxylating) subunit 2 (479 aa).

An N6-(pyridoxal phosphate)lysine modification is found at Lys265.

Belongs to the GcvP family. C-terminal subunit subfamily. The glycine cleavage system is composed of four proteins: P, T, L and H. In this organism, the P 'protein' is a heterodimer of two subunits. Pyridoxal 5'-phosphate serves as cofactor.

It carries out the reaction N(6)-[(R)-lipoyl]-L-lysyl-[glycine-cleavage complex H protein] + glycine + H(+) = N(6)-[(R)-S(8)-aminomethyldihydrolipoyl]-L-lysyl-[glycine-cleavage complex H protein] + CO2. In terms of biological role, the glycine cleavage system catalyzes the degradation of glycine. The P protein binds the alpha-amino group of glycine through its pyridoxal phosphate cofactor; CO(2) is released and the remaining methylamine moiety is then transferred to the lipoamide cofactor of the H protein. In Pseudothermotoga lettingae (strain ATCC BAA-301 / DSM 14385 / NBRC 107922 / TMO) (Thermotoga lettingae), this protein is Probable glycine dehydrogenase (decarboxylating) subunit 2.